The following is a 563-amino-acid chain: DNA polymerase III subunit tau (563 aa).

Position 45–52 (Gly45–Thr52) interacts with ATP. Zn(2+) contacts are provided by Cys64, Cys73, Cys76, and Cys79.

Belongs to the DnaX/STICHEL family. As to quaternary structure, component of the DNA clamp loading complex consisting of tau(3):delta(1):delta'(1). The DNA polymerase III holoenzyme complex contains at least 10 different subunits organized into 3 functionally essential subassemblies: the Pol III core, the beta sliding clamp processivity factor and the clamp-loading complex. The Pol III core (subunits alpha, epsilon and theta) contains the polymerase and the 3'-5' exonuclease proofreading activities. The polymerase is tethered to the template via the dimeric beta sliding clamp processivity factor. The DNA clamp-loading complex assembles the beta sliding clamp onto the primed template and plays a central role in the organization and communication at the replication fork. Forms a complex with replicative DNA helicase DnaB (shown with G.stearothermophilus DnaB) tau(3):DnaB(6); a single ATP hydrolysis even is sufficient for complex formation. Colocalizes with DNA helicases PriA, RecQ and RecS.

It is found in the cytoplasm. Its subcellular location is the nucleoid. It catalyses the reaction DNA(n) + a 2'-deoxyribonucleoside 5'-triphosphate = DNA(n+1) + diphosphate. Functionally, part of the beta sliding clamp loading complex, which hydrolyzes ATP to load the beta clamp onto primed DNA to form the DNA replication pre-initiation complex. DNA polymerase III is a complex, multichain enzyme responsible for most of the replicative DNA synthesis in bacteria. This Bacillus subtilis (strain 168) protein is DNA polymerase III subunit tau.